Here is a 187-residue protein sequence, read N- to C-terminus: Peptidyl-tRNA hydrolase (187 aa).

Tyrosine 16 provides a ligand contact to tRNA. Histidine 21 (proton acceptor) is an active-site residue. Residues tyrosine 66, asparagine 68, and asparagine 114 each contribute to the tRNA site.

The protein belongs to the PTH family. In terms of assembly, monomer.

It localises to the cytoplasm. It carries out the reaction an N-acyl-L-alpha-aminoacyl-tRNA + H2O = an N-acyl-L-amino acid + a tRNA + H(+). Functionally, hydrolyzes ribosome-free peptidyl-tRNAs (with 1 or more amino acids incorporated), which drop off the ribosome during protein synthesis, or as a result of ribosome stalling. In terms of biological role, catalyzes the release of premature peptidyl moieties from peptidyl-tRNA molecules trapped in stalled 50S ribosomal subunits, and thus maintains levels of free tRNAs and 50S ribosomes. The sequence is that of Peptidyl-tRNA hydrolase from Malacoplasma penetrans (strain HF-2) (Mycoplasma penetrans).